Consider the following 286-residue polypeptide: Bifunctional protein FolD (286 aa).

NADP(+) contacts are provided by residues 164 to 166, Ser193, and Ile234; that span reads GRS.

This sequence belongs to the tetrahydrofolate dehydrogenase/cyclohydrolase family. In terms of assembly, homodimer.

It catalyses the reaction (6R)-5,10-methylene-5,6,7,8-tetrahydrofolate + NADP(+) = (6R)-5,10-methenyltetrahydrofolate + NADPH. The catalysed reaction is (6R)-5,10-methenyltetrahydrofolate + H2O = (6R)-10-formyltetrahydrofolate + H(+). It functions in the pathway one-carbon metabolism; tetrahydrofolate interconversion. Its function is as follows. Catalyzes the oxidation of 5,10-methylenetetrahydrofolate to 5,10-methenyltetrahydrofolate and then the hydrolysis of 5,10-methenyltetrahydrofolate to 10-formyltetrahydrofolate. The protein is Bifunctional protein FolD of Oleidesulfovibrio alaskensis (strain ATCC BAA-1058 / DSM 17464 / G20) (Desulfovibrio alaskensis).